The chain runs to 217 residues: MKIVGADGQEQEETDIPFRLWRKFAARRKLQYQSWEEGKEVLLNKLDRNLLTDFKAFAARFSSRPRPSKIFGTSLSEAISGEGNGQSGRGAARNHPRARTRCGATSPNHGGRVVPVPVAAASPGAPKKADEAAYRVRGRGRLITRRAGAAHTQPAAIDLGGGFGHCAQEEKEAPFSQARAPAITRGNRGQRGRKRRCGATNGGFQQPTGANQAWQRR.

Disordered stretches follow at residues 79–113 and 171–217; these read ISGE…GGRV and KEAP…WQRR. Residues 188–197 show a composition bias toward basic residues; it reads RGQRGRKRRC. Polar residues predominate over residues 202-217; that stretch reads GGFQQPTGANQAWQRR.

Belongs to the adenoviridae U exon protein family.

The protein resides in the host nucleus. It is found in the host nucleoplasm. It localises to the host nucleolus. Functionally, might play a role in viral replication since it is associated with viral replication centers. Seems to have an effect on DBP localization. This is U exon protein from Human adenovirus C serotype 5 (HAdV-5).